Here is a 497-residue protein sequence, read N- to C-terminus: MFFRPDFRPRCAKWLIATGLFLMLGACVEKPTTLERVKEDGVLRVITRNSPATYFQDRNGETGFEYELVKRFADDLGVELKIETADNLDDLFDQMNKPGGPVLGAAGLIETSKRKQQARFSHSYLEVTPQVVYRNGQSRPTDPGDLVGKRIVVLKGSAHAEQLAALKAQTPAIEYEESDAVEVVDLLRMVDEGQIDLTLVDSNELAMNQVYFPNVRVAFDLGEAREQRWAVAPGEDNSLLNEINAYLDKVEKNGTLQRLKDRYYGHVDVLGYVGAYTFAQHLQERLPKYEKHFQTSAKKEQVDWRLLAAIGYQESMWQPAVTSKTGVRGLMMLTQNTAQAMGVTNRLDARQSIQGGAKYFAYVKDQLDDKIQEPDRTWLALASYNIGGGHLEDARKLAENEGLNPNKWLDVKKMLPRLAQKKWYSKTRYGYARGGEPVHFVANIRRYYDILTWVTQPQLEGSQVADGNLHVPGVDKTQPPAPTAPVVPASSPEKPAL.

The signal sequence occupies residues 1–29 (MFFRPDFRPRCAKWLIATGLFLMLGACVE). The interval 30–267 (KPTTLERVKE…RLKDRYYGHV (238 aa)) is non-LT domain. The segment at 268-497 (DVLGYVGAYT…PASSPEKPAL (230 aa)) is LT domain. Residue Glu-314 is part of the active site. Residues 464 to 497 (VADGNLHVPGVDKTQPPAPTAPVVPASSPEKPAL) are disordered. Low complexity predominate over residues 486–497 (VVPASSPEKPAL).

The protein in the N-terminal section; belongs to the bacterial solute-binding protein 3 family. This sequence in the C-terminal section; belongs to the transglycosylase Slt family.

The protein resides in the cell outer membrane. It carries out the reaction Exolytic cleavage of the (1-&gt;4)-beta-glycosidic linkage between N-acetylmuramic acid (MurNAc) and N-acetylglucosamine (GlcNAc) residues in peptidoglycan, from either the reducing or the non-reducing ends of the peptidoglycan chains, with concomitant formation of a 1,6-anhydrobond in the MurNAc residue.. In terms of biological role, murein-degrading enzyme that degrades murein glycan strands and insoluble, high-molecular weight murein sacculi, with the concomitant formation of a 1,6-anhydromuramoyl product. Lytic transglycosylases (LTs) play an integral role in the metabolism of the peptidoglycan (PG) sacculus. Their lytic action creates space within the PG sacculus to allow for its expansion as well as for the insertion of various structures such as secretion systems and flagella. The protein is Membrane-bound lytic murein transglycosylase F of Pseudomonas syringae pv. tomato (strain ATCC BAA-871 / DC3000).